The primary structure comprises 242 residues: Ubiquinone biosynthesis O-methyltransferase (242 aa).

Residues arginine 44, glycine 64, aspartate 85, and methionine 129 each contribute to the S-adenosyl-L-methionine site.

The protein belongs to the methyltransferase superfamily. UbiG/COQ3 family.

The enzyme catalyses a 3-demethylubiquinol + S-adenosyl-L-methionine = a ubiquinol + S-adenosyl-L-homocysteine + H(+). It catalyses the reaction a 3-(all-trans-polyprenyl)benzene-1,2-diol + S-adenosyl-L-methionine = a 2-methoxy-6-(all-trans-polyprenyl)phenol + S-adenosyl-L-homocysteine + H(+). It participates in cofactor biosynthesis; ubiquinone biosynthesis. Functionally, O-methyltransferase that catalyzes the 2 O-methylation steps in the ubiquinone biosynthetic pathway. The protein is Ubiquinone biosynthesis O-methyltransferase of Citrobacter koseri (strain ATCC BAA-895 / CDC 4225-83 / SGSC4696).